The sequence spans 285 residues: UPF0354 protein SACOL1793 (285 aa).

It belongs to the UPF0354 family.

This is UPF0354 protein SACOL1793 from Staphylococcus aureus (strain COL).